Here is a 684-residue protein sequence, read N- to C-terminus: Phenoloxidase 1 (684 aa).

Residues 1–50 (MSDKNKLLLLFDRPLETVIVPRGPDQEAFDVPVDLLSDRYKAIGVQVSNR) constitute a propeptide, removed by PPAF1. A glycan (N-linked (GlcNAc...) asparagine) is linked at Asn-80. His-208, His-212, and His-237 together coordinate Cu cation. The active-site Proton acceptor is Glu-349. Residues Asn-352 and Asn-356 are each glycosylated (N-linked (GlcNAc...) asparagine). Cu cation-binding residues include His-364, His-368, and His-404. Residues Asn-486, Asn-491, and Asn-545 are each glycosylated (N-linked (GlcNAc...) asparagine). 2 cysteine pairs are disulfide-bonded: Cys-579/Cys-621 and Cys-581/Cys-628.

The protein belongs to the tyrosinase family. As to quaternary structure, dimer. Might form a homodimer or a heterodimer with PPO1. Might interact with PPAF2 (via CLIP domain); the interaction might be required for PPO1 activity. Cu(2+) serves as cofactor. In terms of processing, propeptide cleaved by PPAF1. As to expression, hemocytes.

The protein resides in the secreted. This is a copper-containing oxidase that functions in the formation of pigments such as melanins and other polyphenolic compounds. Catalyzes the oxidation of o-diphenols (N-acetyldopamine, 4-methylcatechol and dopamine). Cannot oxidize monophenols and p-phenols (L-tyrosine, tyramine, gentisic acid and hydroquinone). Binds to the surface of hemocytes and is involved in hemocyte melanization. Activation of the enzyme in response to bacterial lipopolysaccharides (LPS) suggests it may play a role in innate immunity. The sequence is that of Phenoloxidase 1 from Holotrichia diomphalia (Korean black chafer).